The primary structure comprises 131 residues: Large ribosomal subunit protein bL19 (131 aa).

Over residues 111 to 124 (RIAERAERGSEKGK) the composition is skewed to basic and acidic residues. Residues 111–131 (RIAERAERGSEKGKTTPAAAE) form a disordered region.

This sequence belongs to the bacterial ribosomal protein bL19 family.

Its function is as follows. This protein is located at the 30S-50S ribosomal subunit interface and may play a role in the structure and function of the aminoacyl-tRNA binding site. The chain is Large ribosomal subunit protein bL19 from Methylobacterium nodulans (strain LMG 21967 / CNCM I-2342 / ORS 2060).